Reading from the N-terminus, the 361-residue chain is MRVDQFDFDLPDASIALRPAHPRDAARLLVVRPGRLSPAALDDRFIRDLPELLAAGDVLVVNDTRVIPARLDGFRARGEALARIEATLHKREGGDLWRAFLRPAKKLRAGETILFSSGDAKLAARVVEKGEDGEVLLGFELSGAELDLALERVGRMPLPPYISSKRGADESDAADYQTLFADRPGAVAAPTASLHFTPALLAALVAKGVQIERVTLHVGAGTFLPVKAEDTDDHRMHAEWGEVSAETAGALNAARRAGRRVVAAGTTSLRILESAAGPDGAVAAFSGDTSIFITPGYSFKAVDLLLTNFHLPRSTLFMLVCAFSGLQTMRDAYNHAIAAGYRFYSYGDACLLYPAAPRGAA.

This sequence belongs to the QueA family. In terms of assembly, monomer.

It is found in the cytoplasm. The enzyme catalyses 7-aminomethyl-7-carbaguanosine(34) in tRNA + S-adenosyl-L-methionine = epoxyqueuosine(34) in tRNA + adenine + L-methionine + 2 H(+). The protein operates within tRNA modification; tRNA-queuosine biosynthesis. Transfers and isomerizes the ribose moiety from AdoMet to the 7-aminomethyl group of 7-deazaguanine (preQ1-tRNA) to give epoxyqueuosine (oQ-tRNA). The sequence is that of S-adenosylmethionine:tRNA ribosyltransferase-isomerase from Methylocella silvestris (strain DSM 15510 / CIP 108128 / LMG 27833 / NCIMB 13906 / BL2).